The sequence spans 1254 residues: SUN domain-containing ossification factor (1254 aa).

The N-terminal stretch at 1–29 (MKKHRRALALVSCLFLCSLVWLPSWRVCC) is a signal peptide. 3 disordered regions span residues 58-88 (KKDE…HKLK), 118-270 (EESS…DIPT), and 282-304 (EKEK…KKVQ). Low complexity predominate over residues 130-145 (VENISSSSTSEITPIS). Positions 165–175 (EQSETDCDVGE) are enriched in acidic residues. Asparagine 202 and asparagine 236 each carry an N-linked (GlcNAc...) asparagine glycan. Basic and acidic residues predominate over residues 241–253 (LKNESSDYTKPGD). Positions 284–453 (EKSQSMHASS…SLIRVFGTSM (170 aa)) constitute an SUN domain. A compositionally biased stretch (polar residues) spans 288–297 (SMHASSNGGS). Asparagine 524 carries N-linked (GlcNAc...) asparagine glycosylation. Disordered regions lie at residues 530 to 553 (NATA…PSPE), 583 to 605 (EEEE…EDES), and 759 to 788 (HIPS…SSIE). The segment covering 540–553 (PESTPVSTPVPSPE) has biased composition (low complexity). A coiled-coil region spans residues 909–1009 (NQKESVFMRL…VAELKREVSD (101 aa)). Asparagine 928 and asparagine 955 each carry an N-linked (GlcNAc...) asparagine glycan. A helical transmembrane segment spans residues 1011 to 1031 (QSYLVISLVLCVVLGLMLCMQ). Position 1081 is a phosphoserine (serine 1081). Residues 1152–1172 (EVYHSSYKGPPSEGSSETSSQ) form a disordered region. Over residues 1163–1172 (SEGSSETSSQ) the composition is skewed to low complexity.

O-glycosylated. O-mannosylated by POMT1 and POMT2 and elongated by POMGNT1. Post-translationally, N-glycosylated. As to expression, highly expressed in pancreas and testis and to a lower extent in prostate, ovary, heart, thymus, small intestine and spleen.

It is found in the rough endoplasmic reticulum membrane. Required for bone modeling during late embryogenesis. Regulates type I collagen synthesis in osteoblasts during their postnatal maturation. The sequence is that of SUN domain-containing ossification factor (SUCO) from Homo sapiens (Human).